Reading from the N-terminus, the 726-residue chain is Replication restart protein PriA (726 aa).

Ile234 provides a ligand contact to ATP. The Helicase ATP-binding domain maps to 234-373 (IQSVLYKGVQ…LHRKCFYIKL (140 aa)). A DEAH box motif is present at residues 316-319 (LEEH). Positions 431, 434, 440, 443, 458, 461, 471, and 474 each coordinate Zn(2+).

It belongs to the helicase family. PriA subfamily. Component of the replication restart primosome. The cofactor is Zn(2+).

The catalysed reaction is Couples ATP hydrolysis with the unwinding of duplex DNA by translocating in the 3'-5' direction.. The enzyme catalyses ATP + H2O = ADP + phosphate + H(+). Initiates the restart of stalled replication forks, which reloads the replicative helicase on sites other than the origin of replication. Recognizes and binds to abandoned replication forks and remodels them to uncover a helicase loading site. Promotes assembly of the primosome at these replication forks. This is Replication restart protein PriA from Buchnera aphidicola subsp. Acyrthosiphon pisum (strain APS) (Acyrthosiphon pisum symbiotic bacterium).